A 359-amino-acid chain; its full sequence is Transcription factor MafA (359 aa).

Ser-14 carries the phosphoserine modification. A Glycyl lysine isopeptide (Lys-Gly) (interchain with G-Cter in SUMO2) cross-link involves residue Lys-32. Disordered stretches follow at residues Arg-40–Ala-105 and Gly-172–His-226. Positions Pro-46–Pro-73 are enriched in low complexity. The residue at position 49 (Ser-49) is a Phosphoserine. Thr-53 and Thr-57 each carry phosphothreonine. 2 positions are modified to phosphoserine: Ser-61 and Ser-65. Residues Gly-74–Ser-84 show a composition bias toward gly residues. Residues Gly-181–Ser-209 show a composition bias toward basic residues. Gly residues predominate over residues Gly-210 to Gly-224. The basic motif stretch occupies residues Arg-260–Arg-285. The bZIP domain maps to Arg-260–Leu-323. The segment at Leu-288–Leu-309 is leucine-zipper. Positions Lys-322–Leu-359 are disordered. Over residues Gly-325–Gly-336 the composition is skewed to gly residues. Positions Pro-343 to Leu-359 are enriched in low complexity.

The protein belongs to the bZIP family. Maf subfamily. In terms of assembly, forms homodimers. Interacts with NEUROD1 and PDX1. May interact with MAFB, FOS, JUN and PCAF. In terms of processing, ubiquitinated, leading to its degradation by the proteasome. Phosphorylated at tyrosines. In terms of tissue distribution, expressed in brain, lung, spleen, pancreas and kidney. In the pancreas, expressed in the insulin-producing beta-cells of the islets of Langerhans (at protein level). Also expressed in the eye.

The protein resides in the nucleus. In terms of biological role, transcriptional factor that activates insulin gene expression. Acts synergistically with NEUROD1/BETA2 and PDX1. Binds the insulin enhancer C1/RIPE3b element. Binds to consensus TRE-type MARE 5'-TGCTGACTCAGCA-3' DNA sequence. This is Transcription factor MafA (Mafa) from Mus musculus (Mouse).